The following is a 465-amino-acid chain: uncharacterized protein (465 aa).

Polar residues predominate over residues 87-112 (KTSQQIDSSPPQTPTTSNGSMMTRRQ). 2 disordered regions span residues 87-169 (KTSQ…SYDD) and 201-244 (EGYI…NNIF). The segment covering 113–139 (NANNAISSNNNTNTNVTNGSSSNTSLN) has biased composition (low complexity). The span at 141-157 (GDEEQEEEEEEENDEDS) shows a compositional bias: acidic residues. Over residues 217 to 244 (NRNNNNNNINKNNNNNINNNNNNNNNIF) the composition is skewed to low complexity.

This is an uncharacterized protein from Dictyostelium discoideum (Social amoeba).